The primary structure comprises 242 residues: Purine nucleoside phosphorylase SCO2081 (242 aa).

3 residues coordinate Zn(2+): H68, C106, and H123.

The protein belongs to the purine nucleoside phosphorylase YfiH/LACC1 family. As to quaternary structure, homodimer. It depends on Cu(2+) as a cofactor. The cofactor is Zn(2+).

It catalyses the reaction adenosine + phosphate = alpha-D-ribose 1-phosphate + adenine. The enzyme catalyses S-methyl-5'-thioadenosine + phosphate = 5-(methylsulfanyl)-alpha-D-ribose 1-phosphate + adenine. It carries out the reaction inosine + phosphate = alpha-D-ribose 1-phosphate + hypoxanthine. The catalysed reaction is adenosine + H2O + H(+) = inosine + NH4(+). Its function is as follows. Purine nucleoside enzyme that catalyzes the phosphorolysis of adenosine and inosine nucleosides, yielding D-ribose 1-phosphate and the respective free bases, adenine and hypoxanthine. Also catalyzes the phosphorolysis of S-methyl-5'-thioadenosine into adenine and S-methyl-5-thio-alpha-D-ribose 1-phosphate. Also has adenosine deaminase activity. The polypeptide is Purine nucleoside phosphorylase SCO2081 (Streptomyces coelicolor (strain ATCC BAA-471 / A3(2) / M145)).